A 90-amino-acid polypeptide reads, in one-letter code: Arminin 7722 (90 aa).

Residues 1-18 (MRSASLILFVAIVALTYA) form the signal peptide. The propeptide occupies 19–59 (RSYEDIKEEIRNEVENEILDDLEEENDELDDNAQEVSDPRA). Thr87 is modified (threonine amide).

The protein belongs to the arminin family. In terms of tissue distribution, expressed in entodermal epithelium along the body column.

The protein resides in the secreted. It localises to the target cell membrane. Functionally, antimicrobial peptide with a broad-spectrum antimicrobial activity. Keeps its antibacterial activity under a wide range of salt concentrations that mimic physiological conditions of human blood, which is surprising, since Hydra is an obligate freshwater animal with nearly no salt tolerance. Does not affect red blood cells. The chain is Arminin 7722 from Hydra vulgaris (Hydra).